We begin with the raw amino-acid sequence, 425 residues long: Protein CLP1 homolog (425 aa).

ATP is bound by residues Glu-18, Lys-59, and 121–126 (DVGKST).

This sequence belongs to the Clp1 family. Clp1 subfamily.

The protein resides in the nucleus. Its function is as follows. Required for endonucleolytic cleavage during polyadenylation-dependent pre-mRNA 3'-end formation. This chain is Protein CLP1 homolog (cbc), found in Drosophila pseudoobscura pseudoobscura (Fruit fly).